The chain runs to 263 residues: 3-methyl-2-oxobutanoate hydroxymethyltransferase (263 aa).

The Mg(2+) site is built by Asp45 and Asp84. 3-methyl-2-oxobutanoate contacts are provided by residues Asp45 to Ser46, Asp84, and Lys112. Glu114 is a binding site for Mg(2+). Catalysis depends on Glu180, which acts as the Proton acceptor.

This sequence belongs to the PanB family. In terms of assembly, homodecamer; pentamer of dimers. The cofactor is Mg(2+).

The protein localises to the cytoplasm. The catalysed reaction is 3-methyl-2-oxobutanoate + (6R)-5,10-methylene-5,6,7,8-tetrahydrofolate + H2O = 2-dehydropantoate + (6S)-5,6,7,8-tetrahydrofolate. It functions in the pathway cofactor biosynthesis; (R)-pantothenate biosynthesis; (R)-pantoate from 3-methyl-2-oxobutanoate: step 1/2. Functionally, catalyzes the reversible reaction in which hydroxymethyl group from 5,10-methylenetetrahydrofolate is transferred onto alpha-ketoisovalerate to form ketopantoate. This Klebsiella pneumoniae subsp. pneumoniae (strain ATCC 700721 / MGH 78578) protein is 3-methyl-2-oxobutanoate hydroxymethyltransferase.